A 378-amino-acid polypeptide reads, in one-letter code: uncharacterized protein (378 aa).

Transmembrane regions (helical) follow at residues 7–29 (VTPFFFALALLNLLISLFIRLSQ), 33–55 (LFFVSLVFGFVGLTLMGAMYQII), 68–85 (VSYLVFFLILVSFYEFYT), 90–108 (SGSLFLFLGSLIFFFHLLL), 115–137 (PLTVRFLLASMIYLVLSALFLYL), 152–174 (LTVGSMLNAIYGVELAWIPMLIM), 204–225 (NYKLIALAGLLEFGVALYFLYL), 245–267 (IFLFALLFLPLGMLLGIFSASHA), 280–302 (LILYGFGAFTIFGGMLHLLPRIV), and 347–366 (FSPLHVISTVVYLVIMALFL).

It localises to the cell membrane. This is an uncharacterized protein from Aquifex aeolicus (strain VF5).